We begin with the raw amino-acid sequence, 521 residues long: Probable cytosol aminopeptidase (521 aa).

Residues K268 and D273 each coordinate Mn(2+). K280 is a catalytic residue. Residues D291, D350, and E352 each coordinate Mn(2+). R354 is a catalytic residue.

The protein belongs to the peptidase M17 family. The cofactor is Mn(2+).

The protein localises to the cytoplasm. It catalyses the reaction Release of an N-terminal amino acid, Xaa-|-Yaa-, in which Xaa is preferably Leu, but may be other amino acids including Pro although not Arg or Lys, and Yaa may be Pro. Amino acid amides and methyl esters are also readily hydrolyzed, but rates on arylamides are exceedingly low.. The enzyme catalyses Release of an N-terminal amino acid, preferentially leucine, but not glutamic or aspartic acids.. In terms of biological role, presumably involved in the processing and regular turnover of intracellular proteins. Catalyzes the removal of unsubstituted N-terminal amino acids from various peptides. The protein is Probable cytosol aminopeptidase of Chromobacterium violaceum (strain ATCC 12472 / DSM 30191 / JCM 1249 / CCUG 213 / NBRC 12614 / NCIMB 9131 / NCTC 9757 / MK).